The following is a 71-amino-acid chain: Small ribosomal subunit protein bS21 (71 aa).

The span at 48-59 shows a compositional bias: basic residues; that stretch reads EKASLAKRHAKR. Positions 48 to 71 are disordered; that stretch reads EKASLAKRHAKRNARENARNTRLY. Residues 60-71 show a composition bias toward basic and acidic residues; that stretch reads NARENARNTRLY.

The protein belongs to the bacterial ribosomal protein bS21 family.

This Actinobacillus pleuropneumoniae serotype 5b (strain L20) protein is Small ribosomal subunit protein bS21.